The primary structure comprises 118 residues: DNA-binding protein inhibitor ID-3-B (118 aa).

One can recognise a bHLH domain in the interval 32–84 (SLKGAGIDETMGLLYDMNGCYSKLKELVPGIPQGSKLSQVEILQHVIDYIFDL).

As to quaternary structure, homodimer. Heterodimer with other HLH proteins. Interacts (via HLH domain) with the bHLH protein hes4/hairy2 (via Orange domain). Interacts with stat3.

The protein resides in the nucleus. Transcriptional regulator (lacking a basic DNA binding domain) which negatively regulates the basic helix-loop-helix (bHLH) transcription factors by forming heterodimers and inhibiting their DNA binding and transcriptional activity. Influences cell fate decisions in the embryo by sequestering and blocking the activity of the bHLH transcription factors that control these decisions. Inhibits the binding of myogenic bHLH-containing complexes to E-box DNA, thereby preventing activation of muscle-specific target genes. Also inhibits the activity of neurogenic factor neurod1/neuroD. Plays a role in cell cycle progression and survival of neural crest progenitors; binding to either hes4-B/hairy2b or stat3 blocks the formation of transcription factor complexes and the repressor function of hes4-B/hairy2B, to allow neural crest progenitors to differentiate. May play a role in the regulation of the circadian rhythm. This Xenopus laevis (African clawed frog) protein is DNA-binding protein inhibitor ID-3-B (id3-b).